The chain runs to 230 residues: Voltage-gated hydrogen channel 1 (230 aa).

Over 1–58 the chain is Cytoplasmic; sequence MAGCLRHFTSVGDDTKKREWKQEDVEVAYEEPLKNTPHPFIASYSFRGALKWLLSSHK. Residues 59–79 form a helical membrane-spanning segment; it reads FQIVIICLVILDALFVLVEVL. Residues 80 to 96 are Extracellular-facing; that stretch reads LDLELLAEKVDHIIPEI. The chain crosses the membrane as a helical span at residues 97–119; sequence FHYLSISVLTFFILEIAGKLYAF. The Cytoplasmic portion of the chain corresponds to 120–127; sequence RLEFFHHK. The helical transmembrane segment at 128–148 threads the bilayer; sequence FEVFDAAIVVISFIIDIVYIS. At 149 to 155 the chain is on the extracellular side; it reads REDIFNA. A helical transmembrane segment spans residues 156 to 176; that stretch reads VGLLILLRLWRVARIVNGVIV. At 177 to 230 the chain is on the cytoplasmic side; it reads SVKTRAEEKMHKLKEQKGSLLEKVAQLEQQCAQQEQEIGRLHKLLQEHNVFPAS. A coiled-coil region spans residues 178-225; it reads VKTRAEEKMHKLKEQKGSLLEKVAQLEQQCAQQEQEIGRLHKLLQEHN.

The protein belongs to the hydrogen channel family. In terms of assembly, homodimer.

Its subcellular location is the membrane. The protein resides in the cell membrane. Mediates the voltage-dependent proton permeability of excitable membranes. Forms a proton-selective channel through which protons may pass in accordance with their electrochemical gradient. The chain is Voltage-gated hydrogen channel 1 (hvcn1) from Xenopus laevis (African clawed frog).